A 399-amino-acid polypeptide reads, in one-letter code: Yellow-related salivary protein LJM11 (399 aa).

The N-terminal stretch at 1 to 18 is a signal peptide; that stretch reads MKVFFSIFTLVLFQGTLG. A disulfide bridge links Cys-115 with Cys-186. Asn-213 carries N-linked (GlcNAc...) asparagine glycosylation. Cysteines 319 and 395 form a disulfide. 3 residues coordinate serotonin: Thr-345, Asn-360, and Phe-362.

This sequence belongs to the major royal jelly protein family. As to expression, salivary gland (at protein level).

It is found in the secreted. Probably modulates blood feeding of sand flies on vertebrate species by binding and sequestering different mediators involved in the host response. Binds biogenic amines. Binds serotonin with high affinity. Binds adrenaline and noradrenaline. Binds dopamine and octopamine. Poorly binds histamine. Induces a delayed type hypersensitivity response in host tissues. Induces systemic Th1 immune response in the host. Immunogenic; elicits antibody production in the host. Functions as a chemoattractant for host neutrophils; likely acts through a G-protein-coupled receptor and effect is dependent on calcium influx. Its function is as follows. (Microbial infection) Modulates infection caused by Leishmania species in the host. The chain is Yellow-related salivary protein LJM11 from Lutzomyia longipalpis (Sand fly).